A 252-amino-acid polypeptide reads, in one-letter code: Imidazole glycerol phosphate synthase subunit HisF (252 aa).

Catalysis depends on residues Asp-11 and Asp-130.

The protein belongs to the HisA/HisF family. As to quaternary structure, heterodimer of HisH and HisF.

The protein localises to the cytoplasm. The catalysed reaction is 5-[(5-phospho-1-deoxy-D-ribulos-1-ylimino)methylamino]-1-(5-phospho-beta-D-ribosyl)imidazole-4-carboxamide + L-glutamine = D-erythro-1-(imidazol-4-yl)glycerol 3-phosphate + 5-amino-1-(5-phospho-beta-D-ribosyl)imidazole-4-carboxamide + L-glutamate + H(+). It participates in amino-acid biosynthesis; L-histidine biosynthesis; L-histidine from 5-phospho-alpha-D-ribose 1-diphosphate: step 5/9. Functionally, IGPS catalyzes the conversion of PRFAR and glutamine to IGP, AICAR and glutamate. The HisF subunit catalyzes the cyclization activity that produces IGP and AICAR from PRFAR using the ammonia provided by the HisH subunit. This Petrotoga mobilis (strain DSM 10674 / SJ95) protein is Imidazole glycerol phosphate synthase subunit HisF.